A 371-amino-acid polypeptide reads, in one-letter code: MPNQHTLLLFNLLPVGSNISTWWNFGSMLLTCSALQVMTGFFLAIHYTANINLAFSSIVHITRDVPYGWIMQNLHAIGASMFFICIYIHIARGLYYGSYLNKNVWLSGTTLLIILMATAFFGYVLPWGQMSFWAATVITNLLTAVPYIGTALTTWLWGGFSINDPTLTRFFALHFILPFAIISMSSIHIMLLHTEGSSNPLGTNSDIDKIPFHPYHSHKDILMLTIMITTMFTIMSFSPDIFNDPENFSKANPLVTPQHIKPEWYFLFAYGILRSIPNKLGGTVALVLSVAILMTMPFTHTSYIRSMAFRPIMQLVFWTLIATFITITWAATKPVEPPFTIIGQTTSFLYFSFFIMNPLVGWLENKISFHS.

Transmembrane regions (helical) follow at residues 25–45, 69–90, 105–125, and 170–190; these read FGSMLLTCSALQVMTGFFLAI, WIMQNLHAIGASMFFICIYIHI, WLSGTTLLIILMATAFFGYVL, and FFALHFILPFAIISMSSIHIM. Heme b is bound by residues His75 and His89. The heme b site is built by His174 and His188. Position 193 (His193) interacts with a ubiquinone. 4 consecutive transmembrane segments (helical) span residues 218-238, 280-300, 312-332, and 339-358; these read HKDILMLTIMITTMFTIMSFS, LGGTVALVLSVAILMTMPFTH, IMQLVFWTLIATFITITWAAT, and FTIIGQTTSFLYFSFFIMNP.

This sequence belongs to the cytochrome b family. In terms of assembly, the cytochrome bc1 complex contains 3 respiratory subunits (MT-CYB, CYC1 and UQCRFS1), 2 core proteins (UQCRC1 and UQCRC2) and probably 6 low-molecular weight proteins. Heme b is required as a cofactor.

The protein resides in the mitochondrion inner membrane. Functionally, component of the ubiquinol-cytochrome c reductase complex (complex III or cytochrome b-c1 complex) that is part of the mitochondrial respiratory chain. The b-c1 complex mediates electron transfer from ubiquinol to cytochrome c. Contributes to the generation of a proton gradient across the mitochondrial membrane that is then used for ATP synthesis. The chain is Cytochrome b (MT-CYB) from Coluber constrictor (Eastern racer).